Here is a 489-residue protein sequence, read N- to C-terminus: Glycogen synthase (489 aa).

An ADP-alpha-D-glucose-binding site is contributed by Lys18.

This sequence belongs to the glycosyltransferase 1 family. Bacterial/plant glycogen synthase subfamily.

The catalysed reaction is [(1-&gt;4)-alpha-D-glucosyl](n) + ADP-alpha-D-glucose = [(1-&gt;4)-alpha-D-glucosyl](n+1) + ADP + H(+). Its pathway is glycan biosynthesis; glycogen biosynthesis. Functionally, synthesizes alpha-1,4-glucan chains using ADP-glucose. The protein is Glycogen synthase of Rhodopseudomonas palustris (strain BisA53).